Reading from the N-terminus, the 205-residue chain is Small ribosomal subunit protein uS4 (205 aa).

A compositionally biased stretch (basic residues) spans 1-12 (MSKRVQAKHKLD). Positions 1-49 (MSKRVQAKHKLDRRMGQNIWGRPKSPVNRREYGPGQHGQRRKGKMSDFG) are disordered. An S4 RNA-binding domain is found at 94–155 (RRLDAVVYRS…ASRQLEIVVV (62 aa)).

It belongs to the universal ribosomal protein uS4 family. In terms of assembly, part of the 30S ribosomal subunit. Contacts protein S5. The interaction surface between S4 and S5 is involved in control of translational fidelity.

Its function is as follows. One of the primary rRNA binding proteins, it binds directly to 16S rRNA where it nucleates assembly of the body of the 30S subunit. Functionally, with S5 and S12 plays an important role in translational accuracy. The protein is Small ribosomal subunit protein uS4 of Methylorubrum extorquens (strain CM4 / NCIMB 13688) (Methylobacterium extorquens).